We begin with the raw amino-acid sequence, 210 residues long: Na(+)-translocating NADH-quinone reductase subunit D (210 aa).

A run of 5 helical transmembrane segments spans residues 42 to 62 (FVMT…ISLI), 72 to 92 (IIAQ…VLKA), 103 to 123 (VFVG…AYAM), 131 to 151 (FLDG…VATV), and 178 to 198 (NGLL…IWGV).

The protein belongs to the NqrDE/RnfAE family. Composed of six subunits; NqrA, NqrB, NqrC, NqrD, NqrE and NqrF.

The protein localises to the cell inner membrane. It carries out the reaction a ubiquinone + n Na(+)(in) + NADH + H(+) = a ubiquinol + n Na(+)(out) + NAD(+). Its function is as follows. NQR complex catalyzes the reduction of ubiquinone-1 to ubiquinol by two successive reactions, coupled with the transport of Na(+) ions from the cytoplasm to the periplasm. NqrA to NqrE are probably involved in the second step, the conversion of ubisemiquinone to ubiquinol. This Aeromonas hydrophila subsp. hydrophila (strain ATCC 7966 / DSM 30187 / BCRC 13018 / CCUG 14551 / JCM 1027 / KCTC 2358 / NCIMB 9240 / NCTC 8049) protein is Na(+)-translocating NADH-quinone reductase subunit D.